The primary structure comprises 789 residues: Protein FLOWERING LOCUS D (789 aa).

Residues M1 to N23 are disordered. Positions N76–K177 constitute an SWIRM domain. Residues S195, E214, R216, R222, and G240 to V243 contribute to the FAD site. Residue K287 forms a Glycyl lysine isopeptide (Lys-Gly) (interchain with G-Cter in SUMO) linkage. Residues E595, T604–M605, and G607–G612 contribute to the FAD site. Glycyl lysine isopeptide (Lys-Gly) (interchain with G-Cter in SUMO) cross-links involve residues K693 and K770.

This sequence belongs to the flavin monoamine oxidase family. In terms of assembly, interacts with HDA6. FAD is required as a cofactor. In terms of processing, sumoylated at Lys-287, Lys-693 and Lys-770 by SIZ1. Sumoylation alters its activity and the histone H4 acetylation status of FLC locus, promoting FLC expression.

Probable histone demethylase that promotes flowering independently of the photoperiod and vernalization pathways by repressing FLOWERING LOCUS C (FLC), a floral repressor that blocks the transition from vegetative to reproductive development. Probably mediates histone H3 'Lys-4' demethylation at FLC locus. Seems to act in partial redundancy with LDL1 and LDL2 to repress FLC expression. Required for histone H4 deacetylation of FLC locus. May be a component of the histone deacetylase complex. Forms a histone deacetylase complex with HDA5, HDA6 and MSI4/FVE that represses FLC gene expression to control flowering time. Required for systemic acquired resistance (SAR) toward pathogenic bacteria (e.g. Pseudomonas syringae pv tomato DC3000 (avrPto)). Together with FLD and MSI4/FVE, contributes to dehydroabietinal-dependent (DA, a diterpenoid tricyclic diterpene) activation of flowering ans SAR. This is Protein FLOWERING LOCUS D from Arabidopsis thaliana (Mouse-ear cress).